The sequence spans 322 residues: Arginase-1 (322 aa).

The segment at 1–27 is disordered; it reads MSSKPQSIGVIGAPFSKGQPRGGVEEG. The residue at position 7 (Ser7) is a Phosphoserine. Residue Lys17 is modified to N6-succinyllysine. Ser62 carries the phosphoserine modification. Lys75 bears the N6-succinyllysine mark. His101, Asp124, His126, and Asp128 together coordinate Mn(2+). Residues 126-130, 137-139, and Asp183 each bind substrate; these read HTDIN and TGN. At Ser217 the chain carries Phosphoserine. Positions 232 and 234 each coordinate Mn(2+). 2 residues coordinate substrate: Thr246 and Glu277.

The protein belongs to the arginase family. In terms of assembly, homotrimer. Interacts with CMTM6. Mn(2+) serves as cofactor.

It is found in the cytoplasm. The enzyme catalyses L-arginine + H2O = urea + L-ornithine. Its pathway is nitrogen metabolism; urea cycle; L-ornithine and urea from L-arginine: step 1/1. This Bos taurus (Bovine) protein is Arginase-1 (ARG1).